An 84-amino-acid chain; its full sequence is Small ribosomal subunit protein bS18 (84 aa).

It belongs to the bacterial ribosomal protein bS18 family. As to quaternary structure, part of the 30S ribosomal subunit. Forms a tight heterodimer with protein bS6.

Functionally, binds as a heterodimer with protein bS6 to the central domain of the 16S rRNA, where it helps stabilize the platform of the 30S subunit. The protein is Small ribosomal subunit protein bS18 of Ruthia magnifica subsp. Calyptogena magnifica.